Reading from the N-terminus, the 570-residue chain is MEFKYNGKVESIELNKYSKTLTQDPTQPATQAMYYGIGFKDEDFKKAQVGIVSMDWDGNPCNMHLGTLGSKIKNSVNQTDGLIGLQFHTIGVSDGIANGKLGMRYSLVSREVIADSIETNAGAEYYDAIVAVPGCDKNMPGSIIGMARLNRPSIMVYGGTIEHGEYKGEKLNIVSAFEALGQKITGNISDEDYHGVICNAIPGQGACGGMYTANTLAAAIETLGMSLPYSSSNPAVSQEKEDECDEIGLAIKNLLEKDIKPSDIMTKEAFENAITIVMVLGGSTNAVLHIIAMANAIGVEITQDDFQRISDVTPVLGDFKPSGKYMVEDLHKIGGVPAVLKYLLKEGKLHGDCLTVTGKTLAENVKTALDLDFESQDIMRPLENPIKATGHLQILYGNLAEGGSVAKISGKEGEFFKGTARVFDGEQHFIDGIESGRLHAGDVAVIRNIGPVGGPGMPEMLKPTSALIGAGLGKSCALITDGRFSGGTHGFVVGHIVPEAVEGGLIGLVEDDDIIEIDAVNNSISLKVADDEIARRRANYQKPAPKATRGVLAKFAKLTRPASEGCVTDL.

Residue C61 coordinates [2Fe-2S] cluster. Residue D94 coordinates Mg(2+). A [2Fe-2S] cluster-binding site is contributed by C135. Mg(2+) contacts are provided by D136 and K137. N6-carboxylysine is present on K137. C207 contacts [2Fe-2S] cluster. E459 contacts Mg(2+). S485 serves as the catalytic Proton acceptor.

It belongs to the IlvD/Edd family. Homodimer. [2Fe-2S] cluster is required as a cofactor. The cofactor is Mg(2+).

The enzyme catalyses (2R)-2,3-dihydroxy-3-methylbutanoate = 3-methyl-2-oxobutanoate + H2O. It catalyses the reaction (2R,3R)-2,3-dihydroxy-3-methylpentanoate = (S)-3-methyl-2-oxopentanoate + H2O. It participates in amino-acid biosynthesis; L-isoleucine biosynthesis; L-isoleucine from 2-oxobutanoate: step 3/4. It functions in the pathway amino-acid biosynthesis; L-valine biosynthesis; L-valine from pyruvate: step 3/4. Its function is as follows. Functions in the biosynthesis of branched-chain amino acids. Catalyzes the dehydration of (2R,3R)-2,3-dihydroxy-3-methylpentanoate (2,3-dihydroxy-3-methylvalerate) into 2-oxo-3-methylpentanoate (2-oxo-3-methylvalerate) and of (2R)-2,3-dihydroxy-3-methylbutanoate (2,3-dihydroxyisovalerate) into 2-oxo-3-methylbutanoate (2-oxoisovalerate), the penultimate precursor to L-isoleucine and L-valine, respectively. This Lactococcus lactis subsp. cremoris (strain MG1363) protein is Dihydroxy-acid dehydratase.